The sequence spans 236 residues: Small ribosomal subunit protein uS3 (236 aa).

The region spanning V39–R107 is the KH type-2 domain.

The protein belongs to the universal ribosomal protein uS3 family. In terms of assembly, part of the 30S ribosomal subunit. Forms a tight complex with proteins S10 and S14.

In terms of biological role, binds the lower part of the 30S subunit head. Binds mRNA in the 70S ribosome, positioning it for translation. This Blochmanniella pennsylvanica (strain BPEN) protein is Small ribosomal subunit protein uS3.